The chain runs to 185 residues: NAD(P)H-dependent FMN reductase PA1204 (185 aa).

FMN contacts are provided by residues 13–20 and 81–83; these read SLRSGSYN and YNY. 115–122 is an NAD(+) binding site; the sequence is SAGRFGTA.

It belongs to the SsuE family. Homodimer. The cofactor is FMN.

In terms of biological role, has NAD(P)H-dependent FMN reductase activity. This Pseudomonas aeruginosa (strain ATCC 15692 / DSM 22644 / CIP 104116 / JCM 14847 / LMG 12228 / 1C / PRS 101 / PAO1) protein is NAD(P)H-dependent FMN reductase PA1204.